Consider the following 1036-residue polypeptide: Beta-galactosidase (1036 aa).

Substrate contacts are provided by asparagine 97 and aspartate 197. Residue aspartate 197 coordinates Na(+). Residues glutamate 411, histidine 413, and glutamate 456 each contribute to the Mg(2+) site. Substrate contacts are provided by residues glutamate 456 and 532 to 535; that span reads EYAH. The active-site Proton donor is glutamate 456. The Nucleophile role is filled by glutamate 532. Asparagine 592 provides a ligand contact to Mg(2+). Na(+)-binding residues include phenylalanine 596 and aspartate 599. Residues aspartate 599 and tryptophan 1006 each coordinate substrate.

Belongs to the glycosyl hydrolase 2 family. In terms of assembly, homotetramer. It depends on Mg(2+) as a cofactor. The cofactor is Na(+).

The enzyme catalyses Hydrolysis of terminal non-reducing beta-D-galactose residues in beta-D-galactosides.. The chain is Beta-galactosidase from Leuconostoc mesenteroides subsp. mesenteroides (strain ATCC 8293 / DSM 20343 / BCRC 11652 / CCM 1803 / JCM 6124 / NCDO 523 / NBRC 100496 / NCIMB 8023 / NCTC 12954 / NRRL B-1118 / 37Y).